The sequence spans 231 residues: Small ribosomal subunit protein uS3 (231 aa).

One can recognise a KH type-2 domain in the interval 39 to 107; the sequence is IRKFIMKTLP…GVSLNIVEIR (69 aa).

It belongs to the universal ribosomal protein uS3 family. Part of the 30S ribosomal subunit. Forms a tight complex with proteins S10 and S14.

Functionally, binds the lower part of the 30S subunit head. Binds mRNA in the 70S ribosome, positioning it for translation. The chain is Small ribosomal subunit protein uS3 from Zymomonas mobilis subsp. mobilis (strain ATCC 31821 / ZM4 / CP4).